Reading from the N-terminus, the 243-residue chain is MAELLLGVNIDHIATLRNARGTDYPDPVQAAFIAEQAGADGITVHLREDRRHITDRDVRILRQTLHTRMNLEMAVTEEMLAIAVETRPHFCCLVPEKRQEVTTEGGLDVAGQRDKMRDACARLAAAGIQVSLFIDADEAQINAAAEVGAPFIEIHTGCYANAETDAEQAKELARIASAATLAARLGLKVNAGHGLTYHNVKAIAALPEMHELNIGHAIIGRAVMTGLKEAVAEMKRLMLEARG.

Residue N9 coordinates 3-amino-2-oxopropyl phosphate. Residue 11 to 12 (DH) coordinates 1-deoxy-D-xylulose 5-phosphate. Residue R20 participates in 3-amino-2-oxopropyl phosphate binding. The Proton acceptor role is filled by H45. Residues R47 and H52 each coordinate 1-deoxy-D-xylulose 5-phosphate. E72 (proton acceptor) is an active-site residue. Residue T102 coordinates 1-deoxy-D-xylulose 5-phosphate. The active-site Proton donor is the H193. Residues G194 and 215-216 (GH) contribute to the 3-amino-2-oxopropyl phosphate site.

Belongs to the PNP synthase family. As to quaternary structure, homooctamer; tetramer of dimers.

It is found in the cytoplasm. It catalyses the reaction 3-amino-2-oxopropyl phosphate + 1-deoxy-D-xylulose 5-phosphate = pyridoxine 5'-phosphate + phosphate + 2 H2O + H(+). It participates in cofactor biosynthesis; pyridoxine 5'-phosphate biosynthesis; pyridoxine 5'-phosphate from D-erythrose 4-phosphate: step 5/5. Its function is as follows. Catalyzes the complicated ring closure reaction between the two acyclic compounds 1-deoxy-D-xylulose-5-phosphate (DXP) and 3-amino-2-oxopropyl phosphate (1-amino-acetone-3-phosphate or AAP) to form pyridoxine 5'-phosphate (PNP) and inorganic phosphate. The protein is Pyridoxine 5'-phosphate synthase of Salmonella paratyphi A (strain ATCC 9150 / SARB42).